A 200-amino-acid polypeptide reads, in one-letter code: Imidazoleglycerol-phosphate dehydratase (200 aa).

Belongs to the imidazoleglycerol-phosphate dehydratase family.

Its subcellular location is the cytoplasm. The enzyme catalyses D-erythro-1-(imidazol-4-yl)glycerol 3-phosphate = 3-(imidazol-4-yl)-2-oxopropyl phosphate + H2O. It participates in amino-acid biosynthesis; L-histidine biosynthesis; L-histidine from 5-phospho-alpha-D-ribose 1-diphosphate: step 6/9. The protein is Imidazoleglycerol-phosphate dehydratase of Chlorobium phaeobacteroides (strain DSM 266 / SMG 266 / 2430).